A 425-amino-acid polypeptide reads, in one-letter code: UPF0761 membrane protein XC_3370 (425 aa).

The next 6 membrane-spanning stretches (helical) occupy residues 48–68 (VFAL…FPAF), 105–125 (FTVA…HSIE), 154–174 (GTML…LPLF), 182–202 (LAEF…IVLI), 216–236 (ALPG…GFGF), and 250–270 (ALSA…SVLL).

The protein belongs to the UPF0761 family.

It localises to the cell inner membrane. This chain is UPF0761 membrane protein XC_3370, found in Xanthomonas campestris pv. campestris (strain 8004).